The chain runs to 867 residues: Probable beta-glucosidase A (867 aa).

Residues 1–18 form the signal peptide; the sequence is MRFSWLEVAVTAASLANA. N-linked (GlcNAc...) asparagine glycans are attached at residues asparagine 67, asparagine 218, and asparagine 259. The active site involves aspartate 287. 9 N-linked (GlcNAc...) asparagine glycosylation sites follow: asparagine 322, asparagine 329, asparagine 361, asparagine 449, asparagine 530, asparagine 549, asparagine 571, asparagine 675, and asparagine 719.

Belongs to the glycosyl hydrolase 3 family.

It is found in the secreted. The enzyme catalyses Hydrolysis of terminal, non-reducing beta-D-glucosyl residues with release of beta-D-glucose.. It functions in the pathway glycan metabolism; cellulose degradation. Its function is as follows. Beta-glucosidases are one of a number of cellulolytic enzymes involved in the degradation of cellulosic biomass. Catalyzes the last step releasing glucose from the inhibitory cellobiose. This chain is Probable beta-glucosidase A (bglA), found in Aspergillus clavatus (strain ATCC 1007 / CBS 513.65 / DSM 816 / NCTC 3887 / NRRL 1 / QM 1276 / 107).